The following is a 438-amino-acid chain: Aspartate aminotransferase, cytoplasmic (438 aa).

L-aspartate is bound by residues glycine 73, tryptophan 167, and asparagine 220. Lysine 284 is modified (N6-(pyridoxal phosphate)lysine). Position 412 (arginine 412) interacts with L-aspartate.

It belongs to the class-I pyridoxal-phosphate-dependent aminotransferase family. Homodimer. It depends on pyridoxal 5'-phosphate as a cofactor.

Its subcellular location is the cytoplasm. It catalyses the reaction L-aspartate + 2-oxoglutarate = oxaloacetate + L-glutamate. Functionally, plays a key role in amino acid metabolism. The sequence is that of Aspartate aminotransferase, cytoplasmic (aatB) from Dictyostelium discoideum (Social amoeba).